Reading from the N-terminus, the 1207-residue chain is Putative coatomer subunit alpha (1207 aa).

WD repeat units follow at residues 9–50 (SRSS…DRFD), 51–90 (GHDGPVRGIAFHPTQPLFVSGGDDYKVNVWNYKSRKLLFS), 93–134 (GHMD…AILT), 135–174 (GHSHYVMCAAFHPSEDLIVSASLDQTVRVWDISGLRMKNA), 210–249 (GHDRGVNWCAFHPTLPLILSAGDDRLVKLWRMTASKAWEV), 254–293 (GHFNNVSCCLFHPHQELILSASEDKTIRVWDLNRRTAVQT), 296–336 (RDND…HALN), and 370–411 (SAWL…NSLP). A phosphoserine mark is found at Ser409 and Ser942.

In terms of assembly, oligomeric complex that consists of at least the alpha, beta, beta', gamma, delta, epsilon and zeta subunits.

The protein resides in the cytoplasm. It localises to the golgi apparatus membrane. Its function is as follows. The coatomer is a cytosolic protein complex that binds to dilysine motifs and reversibly associates with Golgi non-clathrin-coated vesicles, which further mediate biosynthetic protein transport from the ER, via the Golgi up to the trans Golgi network. Coatomer complex is required for budding from Golgi membranes, and is essential for the retrograde Golgi-to-ER transport of dilysine-tagged proteins. This Schizosaccharomyces pombe (strain 972 / ATCC 24843) (Fission yeast) protein is Putative coatomer subunit alpha.